Consider the following 852-residue polypeptide: Taste receptor type 1 member 3 (852 aa).

The first 20 residues, M1 to G20, serve as a signal peptide directing secretion. Residues A21–L570 are Extracellular-facing. N85, N130, N264, N285, N380, N411, N432, and N475 each carry an N-linked (GlcNAc...) asparagine glycan. The chain crosses the membrane as a helical span at residues L571–V591. The Cytoplasmic portion of the chain corresponds to H592–G603. Residues G604–F624 form a helical membrane-spanning segment. Topologically, residues P625–L639 are extracellular. Residues S640 to V660 traverse the membrane as a helical segment. At E661–W682 the chain is on the cytoplasmic side. The helical transmembrane segment at L683 to F703 threads the bilayer. The Extracellular portion of the chain corresponds to P704–S729. A helical transmembrane segment spans residues F730–L750. Over V751–R762 the chain is Cytoplasmic. A helical transmembrane segment spans residues G763–A783. The Extracellular portion of the chain corresponds to N784 to P791. A helical transmembrane segment spans residues A792–P812. Residues R813–E852 lie on the Cytoplasmic side of the membrane. A disordered region spans residues G833–E852. The span at G839 to E852 shows a compositional bias: basic and acidic residues.

Belongs to the G-protein coupled receptor 3 family. TAS1R subfamily. In terms of assembly, forms homodimers or heterodimers with TAS1R1 and TAS1R2.

It localises to the cell membrane. Functionally, putative taste receptor. TAS1R1/TAS1R3 responds to the umami taste stimulus (the taste of monosodium glutamate). TAS1R2/TAS1R3 recognizes diverse natural and synthetic sweeteners. TAS1R3 is essential for the recognition and response to the disaccharide trehalose. Sequence differences within and between species can significantly influence the selectivity and specificity of taste responses. This chain is Taste receptor type 1 member 3 (TAS1R3), found in Gorilla gorilla gorilla (Western lowland gorilla).